The chain runs to 213 residues: Uridine kinase (213 aa).

Glycine 15–serine 22 provides a ligand contact to ATP.

The protein belongs to the uridine kinase family.

The protein resides in the cytoplasm. It catalyses the reaction uridine + ATP = UMP + ADP + H(+). The enzyme catalyses cytidine + ATP = CMP + ADP + H(+). The protein operates within pyrimidine metabolism; CTP biosynthesis via salvage pathway; CTP from cytidine: step 1/3. It participates in pyrimidine metabolism; UMP biosynthesis via salvage pathway; UMP from uridine: step 1/1. The sequence is that of Uridine kinase from Escherichia fergusonii (strain ATCC 35469 / DSM 13698 / CCUG 18766 / IAM 14443 / JCM 21226 / LMG 7866 / NBRC 102419 / NCTC 12128 / CDC 0568-73).